A 172-amino-acid chain; its full sequence is uncharacterized protein (172 aa).

3 helical membrane passes run 44-68 (VLVSSVLGALKVILIPCASTYAALT), 86-110 (LASYAMAWLLNILTIAVIIGLVFSL), and 117-135 (VVFISLGLLMSVTTSVTLF).

This sequence belongs to the chlamydial CPn_0442/CT_006/TC_0274 family.

The protein localises to the cell membrane. This is an uncharacterized protein from Chlamydia pneumoniae (Chlamydophila pneumoniae).